The chain runs to 84 residues: uncharacterized protein (84 aa).

It belongs to the chlamydial CPn_0711/CT_665/TC_0036 family.

This is an uncharacterized protein from Chlamydia muridarum (strain MoPn / Nigg).